Here is a 944-residue protein sequence, read N- to C-terminus: Neutral alpha-glucosidase AB (944 aa).

The signal sequence occupies residues 1–28; sequence MAAVAAVAARRRRSWASLVLAFLGVCLG. Cys-41 and Cys-47 are oxidised to a cystine. Ser-52 carries the post-translational modification Phosphoserine. A glycan (N-linked (GlcNAc...) asparagine) is linked at Asn-97. The tract at residues 181-238 is disordered; it reads QRAPRVSQGSKDPAEGDGAQPEETPRDGDKPEETQGKAEKDEPGAWEETFKTHSDSKP. Residues 203–236 show a composition bias toward basic and acidic residues; sequence ETPRDGDKPEETQGKAEKDEPGAWEETFKTHSDS. Substrate contacts are provided by Asp-283 and Asp-429. The active-site Nucleophile is the Asp-542. Arg-602 provides a ligand contact to substrate. The active-site Proton donor is the Asp-618. A disulfide bond links Cys-633 and Cys-644. A substrate-binding site is contributed by His-676.

The protein belongs to the glycosyl hydrolase 31 family. Heterodimer of a catalytic alpha subunit (GANAB) and a beta subunit (PRKCSH). Binds glycosylated PTPRC. In terms of tissue distribution, detected in placenta. Isoform 1 and isoform 2 are expressed in the kidney and liver.

It is found in the endoplasmic reticulum. Its subcellular location is the golgi apparatus. It localises to the melanosome. It carries out the reaction N(4)-(alpha-D-Glc-(1-&gt;3)-alpha-D-Man-(1-&gt;2)-alpha-D-Man-(1-&gt;2)-alpha-D-Man-(1-&gt;3)-[alpha-D-Man-(1-&gt;2)-alpha-D-Man-(1-&gt;3)-[alpha-D-Man-(1-&gt;2)-alpha-D-Man-(1-&gt;6)]-alpha-D-Man-(1-&gt;6)]-beta-D-Man-(1-&gt;4)-beta-D-GlcNAc-(1-&gt;4)-beta-D-GlcNAc)-L-asparaginyl-[protein] + H2O = N(4)-(alpha-D-Man-(1-&gt;2)-alpha-D-Man-(1-&gt;2)-alpha-D-Man-(1-&gt;3)-[alpha-D-Man-(1-&gt;2)-alpha-D-Man-(1-&gt;3)-[alpha-D-Man-(1-&gt;2)-alpha-D-Man-(1-&gt;6)]-alpha-D-Man-(1-&gt;6)]-beta-D-Man-(1-&gt;4)-beta-D-GlcNAc-(1-&gt;4)-beta-D-GlcNAc)-L-asparaginyl-[protein] (N-glucan mannose isomer 9A1,2,3B1,2,3) + beta-D-glucose. It catalyses the reaction N(4)-(alpha-D-Glc-(1-&gt;3)-alpha-D-Glc-(1-&gt;3)-alpha-D-Man-(1-&gt;2)-alpha-D-Man-(1-&gt;2)-alpha-D-Man-(1-&gt;3)-[alpha-D-Man-(1-&gt;2)-alpha-D-Man-(1-&gt;3)-[alpha-D-Man-(1-&gt;2)-alpha-D-Man-(1-&gt;6)]-alpha-D-Man-(1-&gt;6)]-beta-D-Man-(1-&gt;4)-beta-D-GlcNAc-(1-&gt;4)-beta-D-GlcNAc)-L-asparaginyl-[protein] + H2O = N(4)-(alpha-D-Glc-(1-&gt;3)-alpha-D-Man-(1-&gt;2)-alpha-D-Man-(1-&gt;2)-alpha-D-Man-(1-&gt;3)-[alpha-D-Man-(1-&gt;2)-alpha-D-Man-(1-&gt;3)-[alpha-D-Man-(1-&gt;2)-alpha-D-Man-(1-&gt;6)]-alpha-D-Man-(1-&gt;6)]-beta-D-Man-(1-&gt;4)-beta-D-GlcNAc-(1-&gt;4)-beta-D-GlcNAc)-L-asparaginyl-[protein] + beta-D-glucose. Its pathway is glycan metabolism; N-glycan metabolism. Its activity is regulated as follows. Inhibited by deoxynojirimycin. Functionally, catalytic subunit of glucosidase II that cleaves sequentially the 2 innermost alpha-1,3-linked glucose residues from the Glc(2)Man(9)GlcNAc(2) oligosaccharide precursor of immature glycoproteins. Required for PKD1/Polycystin-1 and PKD2/Polycystin-2 maturation and localization to the cell surface and cilia. The polypeptide is Neutral alpha-glucosidase AB (Homo sapiens (Human)).